Here is a 446-residue protein sequence, read N- to C-terminus: MAPSAESEDNSLAQFDLLPKLVKNLDRHLIFPLLDAASAQYYDEETNEPRDVDKAREMTKAKFELLKKTNMTDYVANLHCELEGTDEPPAEYAEKRQKVIKQLQDFEDSVSKLRDLLDREEVISNLRSDKVANLEFLKKEHDVTIEMVTALYDFGNFQYSCGNYPAAAELLYQFRVLSTDNDKVSAATWGKLASEILSGNWEGAMEELKKVREDIDSRLFNNPLAQLQHRTWLTHWALFPLFNDENSREALLEMFFSPNYINTIQTSCPWILRYLAVVVIAGRGRARNTGAYQKQLKDVVRIVKQEGYEYSDPVTDFVRALYIDFDFEEAQRQLPRAEEVLRTDFFLMSIGDSFVDAARHLFFESYCKIHARIDLKRLSEQLGLNVDEGEKWIVNLIRDTRLDAKIDFQEGTVVMNHPNSSVYQQVIERTKGGFFRTQVLSAAVAR.

In terms of domain architecture, PCI spans 240–420 (PLFNDENSRE…GTVVMNHPNS (181 aa)).

This sequence belongs to the eIF-3 subunit E family. As to quaternary structure, component of the eukaryotic translation initiation factor 3 (eIF-3) complex.

It localises to the cytoplasm. Its function is as follows. Component of the eukaryotic translation initiation factor 3 (eIF-3) complex, which is involved in protein synthesis of a specialized repertoire of mRNAs and, together with other initiation factors, stimulates binding of mRNA and methionyl-tRNAi to the 40S ribosome. The eIF-3 complex specifically targets and initiates translation of a subset of mRNAs involved in cell proliferation. The chain is Eukaryotic translation initiation factor 3 subunit E from Pyricularia oryzae (strain 70-15 / ATCC MYA-4617 / FGSC 8958) (Rice blast fungus).